A 380-amino-acid polypeptide reads, in one-letter code: Flap endonuclease 1 (380 aa).

The interval 1 to 104 is N-domain; it reads MGIQGLAKLI…GELAKRSERR (104 aa). A Symmetric dimethylarginine; by PRMT5 modification is found at arginine 19. Residue aspartate 34 participates in Mg(2+) binding. 2 residues coordinate DNA: arginine 47 and arginine 70. Lysine 80 bears the N6-acetyllysine mark. Aspartate 86 serves as a coordination point for Mg(2+). Arginine 100 and arginine 104 each carry symmetric dimethylarginine; by PRMT5. Residues 122–253 are I-domain; it reads EVEKFTKRLV…KRAVDLIQKH (132 aa). Mg(2+)-binding residues include glutamate 158, glutamate 160, aspartate 179, and aspartate 181. Residue glutamate 158 coordinates DNA. Residue serine 187 is modified to Phosphoserine; by CDK2. Arginine 192 is modified (symmetric dimethylarginine; by PRMT5). Residue serine 197 is modified to Phosphoserine. DNA contacts are provided by glycine 231 and aspartate 233. Position 233 (aspartate 233) interacts with Mg(2+). Serine 255, serine 293, and serine 335 each carry phosphoserine. The disordered stretch occupies residues 327–380; it reads RLSKSRQGSTQGRLDDFFKVTGSLSSAKRKEPEPKGSTKKKAKTGAAGKFKRGK. Phosphothreonine is present on threonine 336. Residues 336–344 form an interaction with PCNA region; the sequence is TQGRLDDFF. Lysine 354 bears the N6-acetyllysine mark. A compositionally biased stretch (basic residues) spans 363-380; that stretch reads STKKKAKTGAAGKFKRGK. At threonine 364 the chain carries Phosphothreonine. N6-acetyllysine is present on residues lysine 375, lysine 377, and lysine 380.

It belongs to the XPG/RAD2 endonuclease family. FEN1 subfamily. Interacts with PCNA. Three molecules of FEN1 bind to one PCNA trimer with each molecule binding to one PCNA monomer. PCNA stimulates the nuclease activity without altering cleavage specificity. The C-terminal domain binds EP300; can bind simultaneously to both PCNA and EP300. Interacts with DDX11; this interaction is direct and increases flap endonuclease activity of FEN1. Interacts with WDR4; regulating its endonuclease activity. Interacts with POLB. Requires Mg(2+) as cofactor. In terms of processing, acetylated by EP300. Acetylation inhibits both endonuclease and exonuclease activity. Acetylation also reduces DNA-binding activity but does not affect interaction with PCNA or EP300. Post-translationally, phosphorylation upon DNA damage induces relocalization to the nuclear plasma. Phosphorylation at Ser-187 by CDK2 occurs during late S-phase and results in dissociation from PCNA. Methylation at Arg-192 by PRMT5 impedes Ser-187 phosphorylation and increases interaction with PCNA.

It is found in the nucleus. The protein resides in the nucleolus. It localises to the nucleoplasm. The protein localises to the mitochondrion. Structure-specific nuclease with 5'-flap endonuclease and 5'-3' exonuclease activities involved in DNA replication and repair. During DNA replication, cleaves the 5'-overhanging flap structure that is generated by displacement synthesis when DNA polymerase encounters the 5'-end of a downstream Okazaki fragment. It enters the flap from the 5'-end and then tracks to cleave the flap base, leaving a nick for ligation. Also involved in the long patch base excision repair (LP-BER) pathway, by cleaving within the apurinic/apyrimidinic (AP) site-terminated flap. Acts as a genome stabilization factor that prevents flaps from equilibrating into structures that lead to duplications and deletions. Also possesses 5'-3' exonuclease activity on nicked or gapped double-stranded DNA, and exhibits RNase H activity. Also involved in replication and repair of rDNA and in repairing mitochondrial DNA. This chain is Flap endonuclease 1, found in Homo sapiens (Human).